The sequence spans 1044 residues: Translation initiation factor IF-2 (1044 aa).

The interval 55-458 (EAQEGQGAGK…KRKASAQERR (404 aa)) is disordered. Low complexity predominate over residues 57 to 77 (QEGQGAGKSAAKSAKPAAQPK). Over residues 104–146 (LSEKRERRPLTERRPLAERRPLAERPLVDRPVTERPLAERPAA) the composition is skewed to basic and acidic residues. 3 stretches are compositionally biased toward low complexity: residues 147-168 (ELRP…AQPV), 190-231 (KAQP…QKPA), and 254-265 (ASSRPASAAPAA). The segment covering 267 to 281 (GEKRPAAAAERREEP) has biased composition (basic and acidic residues). Composition is skewed to low complexity over residues 352–375 (AAGQ…AGAP) and 383–395 (APQR…APLA). The segment covering 399–444 (LDPKVAEQAKAGEGKPRYGQSGDKRRADLYDRREHPSSQPSEEKLF) has biased composition (basic and acidic residues). The region spanning 546–714 (PRHPVVTIMG…ILVLAEVSDL (169 aa)) is the tr-type G domain. The interval 555–562 (GHVDHGKT) is G1. Position 555–562 (555–562 (GHVDHGKT)) interacts with GTP. The interval 580-584 (GITQH) is G2. A G3 region spans residues 601–604 (DTPG). Residues 601–605 (DTPGH) and 655–658 (NKID) contribute to the GTP site. The tract at residues 655 to 658 (NKID) is G4. A G5 region spans residues 691–693 (SAK).

This sequence belongs to the TRAFAC class translation factor GTPase superfamily. Classic translation factor GTPase family. IF-2 subfamily.

It localises to the cytoplasm. One of the essential components for the initiation of protein synthesis. Protects formylmethionyl-tRNA from spontaneous hydrolysis and promotes its binding to the 30S ribosomal subunits. Also involved in the hydrolysis of GTP during the formation of the 70S ribosomal complex. The chain is Translation initiation factor IF-2 from Symbiobacterium thermophilum (strain DSM 24528 / JCM 14929 / IAM 14863 / T).